The primary structure comprises 293 residues: Proline iminopeptidase (293 aa).

S105 acts as the Nucleophile in catalysis. D244 is a catalytic residue. H271 functions as the Proton donor in the catalytic mechanism.

It belongs to the peptidase S33 family. Part of the tricorn proteolytic complex.

It carries out the reaction Release of N-terminal proline from a peptide.. In terms of biological role, cleaves H-Pro-AMC as well as a wide spectrum of amino acid substrates and several peptide substrates without a proline at the N-terminus. Proteases F1, F2 and F3 degrade oligopeptides produced by Tricorn (themselves probably produced by the proteasome) yielding free amino acids. The protein is Proline iminopeptidase (pip) of Thermoplasma acidophilum (strain ATCC 25905 / DSM 1728 / JCM 9062 / NBRC 15155 / AMRC-C165).